The sequence spans 483 residues: Glutamyl-tRNA(Gln) amidotransferase subunit A (483 aa).

Residues Lys76 and Ser151 each act as charge relay system in the active site. The Acyl-ester intermediate role is filled by Ser175.

It belongs to the amidase family. GatA subfamily. As to quaternary structure, heterotrimer of A, B and C subunits.

It catalyses the reaction L-glutamyl-tRNA(Gln) + L-glutamine + ATP + H2O = L-glutaminyl-tRNA(Gln) + L-glutamate + ADP + phosphate + H(+). Its function is as follows. Allows the formation of correctly charged Gln-tRNA(Gln) through the transamidation of misacylated Glu-tRNA(Gln) in organisms which lack glutaminyl-tRNA synthetase. The reaction takes place in the presence of glutamine and ATP through an activated gamma-phospho-Glu-tRNA(Gln). This Pseudomonas savastanoi pv. phaseolicola (strain 1448A / Race 6) (Pseudomonas syringae pv. phaseolicola (strain 1448A / Race 6)) protein is Glutamyl-tRNA(Gln) amidotransferase subunit A.